Consider the following 154-residue polypeptide: Myoglobin (154 aa).

The region spanning Gly-2–Lys-148 is the Globin domain. Ser-4 is subject to Phosphoserine. His-65 lines the nitrite pocket. His-65 contributes to the O2 binding site. A Phosphothreonine modification is found at Thr-68. His-94 contributes to the heme b binding site.

Belongs to the globin family. In terms of assembly, monomeric.

It localises to the cytoplasm. Its subcellular location is the sarcoplasm. The catalysed reaction is Fe(III)-heme b-[protein] + nitric oxide + H2O = Fe(II)-heme b-[protein] + nitrite + 2 H(+). It carries out the reaction H2O2 + AH2 = A + 2 H2O. Monomeric heme protein which primary function is to store oxygen and facilitate its diffusion within muscle tissues. Reversibly binds oxygen through a pentacoordinated heme iron and enables its timely and efficient release as needed during periods of heightened demand. Depending on the oxidative conditions of tissues and cells, and in addition to its ability to bind oxygen, it also has a nitrite reductase activity whereby it regulates the production of bioactive nitric oxide. Under stress conditions, like hypoxia and anoxia, it also protects cells against reactive oxygen species thanks to its pseudoperoxidase activity. In Tupaia glis (Common tree shrew), this protein is Myoglobin (MB).